The following is a 313-amino-acid chain: 4-hydroxy-3-methylbut-2-enyl diphosphate reductase (313 aa).

A [4Fe-4S] cluster-binding site is contributed by C14. (2E)-4-hydroxy-3-methylbut-2-enyl diphosphate-binding residues include H43 and H76. H43 and H76 together coordinate dimethylallyl diphosphate. 2 residues coordinate isopentenyl diphosphate: H43 and H76. C98 lines the [4Fe-4S] cluster pocket. (2E)-4-hydroxy-3-methylbut-2-enyl diphosphate is bound at residue H126. H126 contacts dimethylallyl diphosphate. An isopentenyl diphosphate-binding site is contributed by H126. Residue E128 is the Proton donor of the active site. T166 serves as a coordination point for (2E)-4-hydroxy-3-methylbut-2-enyl diphosphate. C196 contacts [4Fe-4S] cluster. Residues S224, S225, N226, and S269 each contribute to the (2E)-4-hydroxy-3-methylbut-2-enyl diphosphate site. The dimethylallyl diphosphate site is built by S224, S225, N226, and S269. S224, S225, N226, and S269 together coordinate isopentenyl diphosphate.

It belongs to the IspH family. It depends on [4Fe-4S] cluster as a cofactor.

The enzyme catalyses isopentenyl diphosphate + 2 oxidized [2Fe-2S]-[ferredoxin] + H2O = (2E)-4-hydroxy-3-methylbut-2-enyl diphosphate + 2 reduced [2Fe-2S]-[ferredoxin] + 2 H(+). It catalyses the reaction dimethylallyl diphosphate + 2 oxidized [2Fe-2S]-[ferredoxin] + H2O = (2E)-4-hydroxy-3-methylbut-2-enyl diphosphate + 2 reduced [2Fe-2S]-[ferredoxin] + 2 H(+). It participates in isoprenoid biosynthesis; dimethylallyl diphosphate biosynthesis; dimethylallyl diphosphate from (2E)-4-hydroxy-3-methylbutenyl diphosphate: step 1/1. It functions in the pathway isoprenoid biosynthesis; isopentenyl diphosphate biosynthesis via DXP pathway; isopentenyl diphosphate from 1-deoxy-D-xylulose 5-phosphate: step 6/6. Catalyzes the conversion of 1-hydroxy-2-methyl-2-(E)-butenyl 4-diphosphate (HMBPP) into a mixture of isopentenyl diphosphate (IPP) and dimethylallyl diphosphate (DMAPP). Acts in the terminal step of the DOXP/MEP pathway for isoprenoid precursor biosynthesis. The protein is 4-hydroxy-3-methylbut-2-enyl diphosphate reductase of Tropheryma whipplei (strain TW08/27) (Whipple's bacillus).